The sequence spans 266 residues: Zinc transporter ZupT (266 aa).

The next 8 helical transmembrane spans lie at 8 to 28 (LLLTLLAGLSTGIGSAMALAV), 36 to 56 (LALSLGFSAGIMLYVSFMEII), 71 to 91 (AGAWVSTISFFGGMLFTWAID), 123 to 143 (GIFTAAAIAIHNFPEGMAVFF), 152 to 172 (GIVIASTIALHNIPEGMAVAV), 185 to 205 (FSLSFLSGLAEPLGALVGYTL), 209 to 229 (FLTPFVLGIVLASVSGIMVYI), and 246 to 266 (LAITGLIAGMAVMALSLLLLT). Positions 134 and 137 each coordinate Fe(2+). Residues Glu-137 and His-162 each contribute to the Zn(2+) site. Fe(2+) is bound by residues Asn-163, Glu-166, and Glu-195. Glu-166 lines the Zn(2+) pocket.

Belongs to the ZIP transporter (TC 2.A.5) family. ZupT subfamily.

The protein localises to the cell inner membrane. The catalysed reaction is Zn(2+)(in) = Zn(2+)(out). Its function is as follows. Mediates zinc uptake. May also transport other divalent cations. The sequence is that of Zinc transporter ZupT from Chlorobium luteolum (strain DSM 273 / BCRC 81028 / 2530) (Pelodictyon luteolum).